Consider the following 216-residue polypeptide: Octanoyltransferase (216 aa).

The 184-residue stretch at 33–216 (AATADELWIV…ANRLSTSLSR (184 aa)) folds into the BPL/LPL catalytic domain. Substrate-binding positions include 72-79 (RGGEVTYH), 148-150 (ALG), and 162-164 (GVS). The active-site Acyl-thioester intermediate is the cysteine 180.

It belongs to the LipB family.

The protein localises to the cytoplasm. It carries out the reaction octanoyl-[ACP] + L-lysyl-[protein] = N(6)-octanoyl-L-lysyl-[protein] + holo-[ACP] + H(+). It functions in the pathway protein modification; protein lipoylation via endogenous pathway; protein N(6)-(lipoyl)lysine from octanoyl-[acyl-carrier-protein]: step 1/2. Its function is as follows. Catalyzes the transfer of endogenously produced octanoic acid from octanoyl-acyl-carrier-protein onto the lipoyl domains of lipoate-dependent enzymes. Lipoyl-ACP can also act as a substrate although octanoyl-ACP is likely to be the physiological substrate. The protein is Octanoyltransferase of Janthinobacterium sp. (strain Marseille) (Minibacterium massiliensis).